Consider the following 218-residue polypeptide: Grancalcin (218 aa).

4 consecutive EF-hand domains span residues 49–84 (SSAG…SGIS), 85–119 (GTYS…KELW), 120–155 (SALN…MGYR), and 156–191 (LSPQ…ALTD). Ca(2+) is bound by residues Asp103, Asp105, Thr107, Lys109, Asp133, Asp135, Ser137, Thr139, and Glu144.

Homodimer. Interacts with SRI and LCP1.

The protein localises to the cytoplasm. The protein resides in the cytoplasmic granule membrane. In terms of biological role, calcium-binding protein that may play a role in the adhesion of neutrophils to fibronectin. May play a role in the formation of focal adhesions. The protein is Grancalcin (GCA) of Pongo abelii (Sumatran orangutan).